Here is a 178-residue protein sequence, read N- to C-terminus: Orotate phosphoribosyltransferase (178 aa).

5-phospho-alpha-D-ribose 1-diphosphate contacts are provided by residues Arg92, Lys93, Lys96, and 118-126 (EDVTTTGGS). Residues Thr122 and Arg150 each contribute to the orotate site.

It belongs to the purine/pyrimidine phosphoribosyltransferase family. PyrE subfamily. As to quaternary structure, homodimer. Mg(2+) is required as a cofactor.

It carries out the reaction orotidine 5'-phosphate + diphosphate = orotate + 5-phospho-alpha-D-ribose 1-diphosphate. Its pathway is pyrimidine metabolism; UMP biosynthesis via de novo pathway; UMP from orotate: step 1/2. In terms of biological role, catalyzes the transfer of a ribosyl phosphate group from 5-phosphoribose 1-diphosphate to orotate, leading to the formation of orotidine monophosphate (OMP). The polypeptide is Orotate phosphoribosyltransferase (Methanosphaera stadtmanae (strain ATCC 43021 / DSM 3091 / JCM 11832 / MCB-3)).